The chain runs to 118 residues: Small ribosomal subunit protein uS13 (118 aa).

Residues 92–118 (RRSLPVRGQRTKTNARTRKGPRKPIKK) form a disordered region.

This sequence belongs to the universal ribosomal protein uS13 family. Part of the 30S ribosomal subunit. Forms a loose heterodimer with protein S19. Forms two bridges to the 50S subunit in the 70S ribosome.

Its function is as follows. Located at the top of the head of the 30S subunit, it contacts several helices of the 16S rRNA. In the 70S ribosome it contacts the 23S rRNA (bridge B1a) and protein L5 of the 50S subunit (bridge B1b), connecting the 2 subunits; these bridges are implicated in subunit movement. Contacts the tRNAs in the A and P-sites. The sequence is that of Small ribosomal subunit protein uS13 from Acinetobacter baylyi (strain ATCC 33305 / BD413 / ADP1).